The sequence spans 429 residues: Adenylosuccinate synthetase (429 aa).

Residues 13-19 and 41-43 contribute to the GTP site; these read GDEGKGK and GHT. Asp-14 acts as the Proton acceptor in catalysis. Asp-14 and Gly-41 together coordinate Mg(2+). IMP contacts are provided by residues 14 to 17, 39 to 42, Thr-130, Arg-144, Gln-225, Thr-240, and Arg-304; these read DEGK and NAGH. The active-site Proton donor is His-42. Position 300–306 (300–306) interacts with substrate; it reads ATTGRRR. GTP contacts are provided by residues Arg-306, 332-334, and 417-419; these read KLD and STG.

This sequence belongs to the adenylosuccinate synthetase family. Homodimer. It depends on Mg(2+) as a cofactor.

The protein resides in the cytoplasm. It carries out the reaction IMP + L-aspartate + GTP = N(6)-(1,2-dicarboxyethyl)-AMP + GDP + phosphate + 2 H(+). It functions in the pathway purine metabolism; AMP biosynthesis via de novo pathway; AMP from IMP: step 1/2. In terms of biological role, plays an important role in the de novo pathway of purine nucleotide biosynthesis. Catalyzes the first committed step in the biosynthesis of AMP from IMP. The sequence is that of Adenylosuccinate synthetase from Buchnera aphidicola subsp. Baizongia pistaciae (strain Bp).